A 654-amino-acid chain; its full sequence is Cytochrome B pre-mRNA-processing protein 1 (654 aa).

It is found in the mitochondrion. Responsible for conferring a stable 5'-end on cytochrome b mRNA. This chain is Cytochrome B pre-mRNA-processing protein 1 (CBP1), found in Saccharomyces cerevisiae (strain ATCC 204508 / S288c) (Baker's yeast).